Consider the following 545-residue polypeptide: Triacylglycerol lipase ptl1 (545 aa).

The 177-residue stretch at 182–358 folds into the PNPLA domain; sequence LYFNGGTAFG…EVCTPKNFIW (177 aa). The GXSXG motif lies at 213 to 217; sequence GCASG.

The protein resides in the lipid droplet. The enzyme catalyses a triacylglycerol + H2O = a diacylglycerol + a fatty acid + H(+). Functionally, lipid particle-localized triacylglycerol (TAG) lipase. The lipid droplet/particle is a lipid storage compartment which serves as a depot of energy and building blocks for membrane lipid biosynthesis. Involved in the mobilization of the non-polar storage lipids triacylglycerols (TAGs) from lipid particles by hydrolysis of TAGs, releasing and supplying specific fatty acids to the appropriate metabolic pathways. The protein is Triacylglycerol lipase ptl1 (ptl1) of Schizosaccharomyces pombe (strain 972 / ATCC 24843) (Fission yeast).